The primary structure comprises 379 residues: ATP phosphoribosyltransferase regulatory subunit (379 aa).

This sequence belongs to the class-II aminoacyl-tRNA synthetase family. HisZ subfamily. As to quaternary structure, heteromultimer composed of HisG and HisZ subunits.

It localises to the cytoplasm. It participates in amino-acid biosynthesis; L-histidine biosynthesis; L-histidine from 5-phospho-alpha-D-ribose 1-diphosphate: step 1/9. Required for the first step of histidine biosynthesis. May allow the feedback regulation of ATP phosphoribosyltransferase activity by histidine. The chain is ATP phosphoribosyltransferase regulatory subunit from Gluconobacter oxydans (strain 621H) (Gluconobacter suboxydans).